We begin with the raw amino-acid sequence, 101 residues long: Small ribosomal subunit protein uS10 (101 aa).

Belongs to the universal ribosomal protein uS10 family. In terms of assembly, part of the 30S ribosomal subunit.

Its function is as follows. Involved in the binding of tRNA to the ribosomes. This chain is Small ribosomal subunit protein uS10, found in Christiangramia forsetii (strain DSM 17595 / CGMCC 1.15422 / KT0803) (Gramella forsetii).